The sequence spans 404 residues: D-galactonate dehydratase family member PC1_0802 (404 aa).

The substrate site is built by N37 and H122. The active-site Proton donor/acceptor is Y159. D212 provides a ligand contact to Mg(2+). Catalysis depends on H214, which acts as the Proton donor/acceptor. Mg(2+)-binding residues include E238 and E264. 5 residues coordinate substrate: E264, R285, H314, D318, and E341.

Belongs to the mandelate racemase/muconate lactonizing enzyme family. GalD subfamily. Mg(2+) serves as cofactor.

The enzyme catalyses D-mannonate = 2-dehydro-3-deoxy-D-gluconate + H2O. Functionally, has low D-mannonate dehydratase activity (in vitro), suggesting that this is not a physiological substrate and that it has no significant role in D-mannonate degradation in vivo. Has no detectable activity with a panel of 70 other acid sugars (in vitro). This Pectobacterium carotovorum subsp. carotovorum (strain PC1) protein is D-galactonate dehydratase family member PC1_0802.